A 194-amino-acid polypeptide reads, in one-letter code: Glycerol-3-phosphate acyltransferase (194 aa).

6 consecutive transmembrane segments (helical) span residues 2–22 (AFFC…GVWI), 52–72 (LGVA…YIAS), 80–100 (DLVI…FISF), 112–132 (VFLF…ILVA), 137–157 (YVSL…FFTH), and 161–181 (YLFA…KTNI).

The protein belongs to the PlsY family. In terms of assembly, probably interacts with PlsX.

It localises to the cell inner membrane. It catalyses the reaction an acyl phosphate + sn-glycerol 3-phosphate = a 1-acyl-sn-glycero-3-phosphate + phosphate. It functions in the pathway lipid metabolism; phospholipid metabolism. Functionally, catalyzes the transfer of an acyl group from acyl-phosphate (acyl-PO(4)) to glycerol-3-phosphate (G3P) to form lysophosphatidic acid (LPA). This enzyme utilizes acyl-phosphate as fatty acyl donor, but not acyl-CoA or acyl-ACP. This Fusobacterium nucleatum subsp. nucleatum (strain ATCC 25586 / DSM 15643 / BCRC 10681 / CIP 101130 / JCM 8532 / KCTC 2640 / LMG 13131 / VPI 4355) protein is Glycerol-3-phosphate acyltransferase.